The sequence spans 44 residues: Thymosin beta-10 (44 aa).

Belongs to the thymosin beta family.

Its subcellular location is the cytoplasm. The protein resides in the cytoskeleton. In terms of biological role, plays an important role in the organization of the cytoskeleton. Binds to and sequesters actin monomers (G actin) and therefore inhibits actin polymerization. This chain is Thymosin beta-10, found in Torpedo marmorata (Marbled electric ray).